The following is a 174-amino-acid chain: uncharacterized protein (174 aa).

2 consecutive transmembrane segments (helical) span residues 8 to 28 (FLFIVVFLFHGFMFSVVNYVF) and 146 to 166 (IVSWILYVFLLATLFLSIQFI).

It localises to the cell membrane. This is an uncharacterized protein from Haemophilus influenzae (strain ATCC 51907 / DSM 11121 / KW20 / Rd).